A 438-amino-acid chain; its full sequence is Methylenetetrahydrofolate--tRNA-(uracil-5-)-methyltransferase TrmFO (438 aa).

7-12 (GAGLAG) serves as a coordination point for FAD.

It belongs to the MnmG family. TrmFO subfamily. It depends on FAD as a cofactor.

It localises to the cytoplasm. The enzyme catalyses uridine(54) in tRNA + (6R)-5,10-methylene-5,6,7,8-tetrahydrofolate + NADH + H(+) = 5-methyluridine(54) in tRNA + (6S)-5,6,7,8-tetrahydrofolate + NAD(+). The catalysed reaction is uridine(54) in tRNA + (6R)-5,10-methylene-5,6,7,8-tetrahydrofolate + NADPH + H(+) = 5-methyluridine(54) in tRNA + (6S)-5,6,7,8-tetrahydrofolate + NADP(+). Catalyzes the folate-dependent formation of 5-methyl-uridine at position 54 (M-5-U54) in all tRNAs. This is Methylenetetrahydrofolate--tRNA-(uracil-5-)-methyltransferase TrmFO from Sulfurihydrogenibium sp. (strain YO3AOP1).